A 231-amino-acid chain; its full sequence is Ribonuclease P protein component 3 (231 aa).

Belongs to the eukaryotic/archaeal RNase P protein component 3 family. As to quaternary structure, consists of a catalytic RNA component and at least 4-5 protein subunits.

The protein localises to the cytoplasm. It catalyses the reaction Endonucleolytic cleavage of RNA, removing 5'-extranucleotides from tRNA precursor.. In terms of biological role, part of ribonuclease P, a protein complex that generates mature tRNA molecules by cleaving their 5'-ends. This Methanococcus maripaludis (strain C5 / ATCC BAA-1333) protein is Ribonuclease P protein component 3.